The chain runs to 731 residues: 1,4-alpha-glucan branching enzyme GlgB 2 (731 aa).

Residue D410 is the Nucleophile of the active site. Catalysis depends on E463, which acts as the Proton donor.

It belongs to the glycosyl hydrolase 13 family. GlgB subfamily. Monomer.

It carries out the reaction Transfers a segment of a (1-&gt;4)-alpha-D-glucan chain to a primary hydroxy group in a similar glucan chain.. The protein operates within glycan biosynthesis; glycogen biosynthesis. Catalyzes the formation of the alpha-1,6-glucosidic linkages in glycogen by scission of a 1,4-alpha-linked oligosaccharide from growing alpha-1,4-glucan chains and the subsequent attachment of the oligosaccharide to the alpha-1,6 position. The chain is 1,4-alpha-glucan branching enzyme GlgB 2 from Xanthomonas oryzae pv. oryzae (strain MAFF 311018).